We begin with the raw amino-acid sequence, 110 residues long: Large ribosomal subunit protein uL22 (110 aa).

It belongs to the universal ribosomal protein uL22 family. Part of the 50S ribosomal subunit.

Its function is as follows. This protein binds specifically to 23S rRNA; its binding is stimulated by other ribosomal proteins, e.g. L4, L17, and L20. It is important during the early stages of 50S assembly. It makes multiple contacts with different domains of the 23S rRNA in the assembled 50S subunit and ribosome. Functionally, the globular domain of the protein is located near the polypeptide exit tunnel on the outside of the subunit, while an extended beta-hairpin is found that lines the wall of the exit tunnel in the center of the 70S ribosome. This chain is Large ribosomal subunit protein uL22, found in Saccharophagus degradans (strain 2-40 / ATCC 43961 / DSM 17024).